The primary structure comprises 98 residues: TTCTSTQQTAAYTTLVSILSDSSFNKCASDSGYSMLTAKALPTTAQYKLMCASTACNTMIKKIVSLNPPNCDLTVPTSGLVLNVYEYANGFSTKCASL.

Disulfide bonds link cysteine 3-cysteine 71, cysteine 27-cysteine 56, and cysteine 51-cysteine 95.

This sequence belongs to the elicitin family.

It localises to the secreted. Its function is as follows. Induces local and distal defense responses (incompatible hypersensitive reaction) in plants from the solanaceae and cruciferae families. Elicits leaf necrosis and causes the accumulation of pathogenesis-related proteins. Might interact with the lipidic molecules of the plasma membrane. In Phytophthora drechsleri, this protein is Beta-elicitin DRE-beta.